The following is a 795-amino-acid chain: Lon protease (795 aa).

The Lon N-terminal domain maps to 7–213 (SQILVVRGQV…KIIQAGIEDL (207 aa)). Residue 379–386 (GPPGVGKS) coordinates ATP. The region spanning 615–795 (VSLPGIVNGM…YSDIYNKLFS (181 aa)) is the Lon proteolytic domain. Residues Ser702 and Lys745 contribute to the active site.

It belongs to the peptidase S16 family. In terms of assembly, homohexamer. Organized in a ring with a central cavity.

It is found in the cytoplasm. The enzyme catalyses Hydrolysis of proteins in presence of ATP.. ATP-dependent serine protease that mediates the selective degradation of mutant and abnormal proteins as well as certain short-lived regulatory proteins. Required for cellular homeostasis and for survival from DNA damage and developmental changes induced by stress. Degrades polypeptides processively to yield small peptide fragments that are 5 to 10 amino acids long. Binds to DNA in a double-stranded, site-specific manner. This chain is Lon protease, found in Mycoplasma genitalium (strain ATCC 33530 / DSM 19775 / NCTC 10195 / G37) (Mycoplasmoides genitalium).